A 523-amino-acid chain; its full sequence is GMP synthase [glutamine-hydrolyzing] (523 aa).

A Glutamine amidotransferase type-1 domain is found at 8 to 205 (KILILDFGSQ…VVGICGCECK (198 aa)). Cys-85 functions as the Nucleophile in the catalytic mechanism. Active-site residues include His-179 and Glu-181. Residues 206 to 398 (WTAENIIEDA…LGLPAEMLNR (193 aa)) enclose the GMPS ATP-PPase domain. 233–239 (SGGVDSS) serves as a coordination point for ATP.

In terms of assembly, homodimer.

It catalyses the reaction XMP + L-glutamine + ATP + H2O = GMP + L-glutamate + AMP + diphosphate + 2 H(+). The protein operates within purine metabolism; GMP biosynthesis; GMP from XMP (L-Gln route): step 1/1. Its function is as follows. Catalyzes the synthesis of GMP from XMP. The protein is GMP synthase [glutamine-hydrolyzing] of Actinobacillus pleuropneumoniae serotype 3 (strain JL03).